Reading from the N-terminus, the 229-residue chain is uncharacterized protein (229 aa).

22–29 (GMIAFGKT) contacts ATP.

This is an uncharacterized protein from Mycoplasma pneumoniae (strain ATCC 29342 / M129 / Subtype 1) (Mycoplasmoides pneumoniae).